The sequence spans 85 residues: Large ribosomal subunit protein bL27 (85 aa).

The interval 1–20 (MAHKKAGGSTRNGRDSEAKR) is disordered.

It belongs to the bacterial ribosomal protein bL27 family.

This is Large ribosomal subunit protein bL27 from Klebsiella pneumoniae (strain 342).